A 301-amino-acid chain; its full sequence is Ornithine carbamoyltransferase (301 aa).

Residues Arg-100 and 127–130 (HPCQ) each bind carbamoyl phosphate. L-ornithine is bound by residues Asn-158, Asp-221, and 225–226 (SM). The carbamoyl phosphate site is built by Cys-260 and Arg-288.

This sequence belongs to the aspartate/ornithine carbamoyltransferase superfamily. OTCase family. The enzyme is present as a mixture of trimers and dodecamers, with the relative proportions of the two forms depending on the salt concentration. In addition, the trimeric fraction could reassociate into dodecamers when the salt concentration is increased. It appears that in vivo, the main fraction is in the dodecameric form.

The protein localises to the cytoplasm. The catalysed reaction is carbamoyl phosphate + L-ornithine = L-citrulline + phosphate + H(+). Its pathway is amino-acid biosynthesis; L-arginine biosynthesis; L-arginine from L-ornithine and carbamoyl phosphate: step 1/3. With respect to regulation, inhibited by excess of arginine and by the bisubstrate delta-N-phosphonoacetyl-L-ornithine (PALO). Its function is as follows. Reversibly catalyzes the transfer of the carbamoyl group from carbamoyl phosphate (CP) to the N(epsilon) atom of ornithine (ORN) to produce L-citrulline, which is a substrate for argininosuccinate synthetase, the enzyme involved in the final step in arginine biosynthesis. The protein is Ornithine carbamoyltransferase of Moritella abyssi.